Here is a 77-residue protein sequence, read N- to C-terminus: Chaplin-H (77 aa).

The signal sequence occupies residues 1–25 (MLKKVVAAAAATGGLVLAGAGMAVA). The 41-residue stretch at 36–76 (SPGVLSGNVVQVPVHVPVNVCGNTISVIGLLNPAFGNVCIN) folds into the Chaplin domain. Forms amyloid fibrils in vitro regions lie at residues 38–54 (GVLS…VPVN) and 57–72 (GNTI…AFGN). An intrachain disulfide couples cysteine 56 to cysteine 74.

It belongs to the chaplin family. Short chaplin subfamily. In terms of assembly, homodimer; disulfide linked. About 10% of ChpH isolated from cell wall forms disulfide-bonded homodimers.

It is found in the cell surface. Its subcellular location is the secreted. The protein localises to the cell wall. It localises to the fimbrium. In terms of biological role, one of 8 partially redundant surface-active proteins required for efficient formation of aerial mycelium; the short chaplins assemble into a hydrophobic, amyloidal fibrillar surface layer that envelopes and protects aerial hyphae and spores, presumably anchored to the long chaplins. Chaplins have an overlapping function with the surface-active SapB peptide; chaplins are essential on minimal medium while on rich medium both chaplins and SapB are required for efficient aerial hyphae formation. Chaplins are also involved in cell attachment to a hydrophobic surface. Forms amyloid fibrils in vitro probably composed of stacked beta-sheets. A small chaplin extract (ChpD, ChpE, ChpF, ChpG and ChpH) self-assembles into 2 different amyloids; small fibrils at the air-water interface form an amphipathic membrane that resembles spore-surface structures involved in aerial hyphae formation, and hydrophilic fibrils in solution that resemble the fibers that attach cells to a hydrophobic surface. At the air-water interface the hydrophilic surface is in contact with water (probably equivalent to the peptidoglycan layer), while the hydrophobic face is exposed to the air, making the surface of the aerial hyphae hydrophobic. A minimal chaplin strain capable of forming aerial mycelium/hyphae on minimal medium contains ChpC, ChpE and ChpH. The strain also has restored rodlet formation on the hyphae surface. A small chaplin extract applied to a chaplin-deficient strain restores aerial hyphae formation. The small chaplin extract forms an amyloid-like structure similar to that seen on the surface of cells without rodlets (rdlA-rdlB deletions), and is highly surface active, reducing surface tension from 72 to 26 mJ/m(2), which probably allows escape of hyphae from an aqueous environment into air. The sequence is that of Chaplin-H from Streptomyces coelicolor (strain ATCC BAA-471 / A3(2) / M145).